The sequence spans 156 residues: Ribosomal RNA large subunit methyltransferase H (156 aa).

Residues Leu73, Gly104, and 123-128 contribute to the S-adenosyl-L-methionine site; that span reads LSSLTL.

This sequence belongs to the RNA methyltransferase RlmH family. Homodimer.

It localises to the cytoplasm. It catalyses the reaction pseudouridine(1915) in 23S rRNA + S-adenosyl-L-methionine = N(3)-methylpseudouridine(1915) in 23S rRNA + S-adenosyl-L-homocysteine + H(+). Functionally, specifically methylates the pseudouridine at position 1915 (m3Psi1915) in 23S rRNA. The protein is Ribosomal RNA large subunit methyltransferase H of Bordetella bronchiseptica (strain ATCC BAA-588 / NCTC 13252 / RB50) (Alcaligenes bronchisepticus).